The chain runs to 274 residues: Mitogen-activated protein kinase 4 (274 aa).

ATP is bound by residues 1 to 8 (GCGGNGLV) and lysine 23. Residues 1-274 (GCGGNGLVLS…KILTFSPMDR (274 aa)) enclose the Protein kinase domain. Catalysis depends on aspartate 123, which acts as the Proton acceptor. Serine 160 carries the post-translational modification Phosphoserine. Positions 160–162 (SEG) match the SEG motif motif.

The protein belongs to the protein kinase superfamily. CMGC Ser/Thr protein kinase family. MAP kinase subfamily. Homodimer. Heterodimer with ERK3/MAPK6. Interacts with MAPKAPK5. It depends on Mg(2+) as a cofactor. In terms of processing, phosphorylated by PAK1, PAK2 and PAK3 in the activation loop resulting in catalytic activation. Phosphorylated by MAPKAPK5 at other sites. In terms of tissue distribution, exclusively detected in the brain, where expression is restricted to the choroid plexus and hippocampus, and to a lesser extent in lung.

It localises to the cytoplasm. Its subcellular location is the nucleus. It carries out the reaction L-seryl-[protein] + ATP = O-phospho-L-seryl-[protein] + ADP + H(+). It catalyses the reaction L-threonyl-[protein] + ATP = O-phospho-L-threonyl-[protein] + ADP + H(+). Activated by phosphorylation in the activation loop. Atypical MAPK protein. Phosphorylates microtubule-associated protein 2 (MAP2) and MAPKAPK5. The precise role of the complex formed with MAPKAPK5 is still unclear, but the complex follows a complex set of phosphorylation events: upon interaction with atypical MAPKAPK5, ERK4/MAPK4 is phosphorylated and then mediates phosphorylation and activation of MAPKAPK5, which in turn phosphorylates ERK4/MAPK4. May promote entry in the cell cycle. The protein is Mitogen-activated protein kinase 4 (Mapk4) of Rattus norvegicus (Rat).